The sequence spans 106 residues: Transcriptional and immune response regulator (106 aa).

As to quaternary structure, monomer. Interacts with NOTCH2 (via ANK repeats), the interaction inhibits the nuclear translocation of NOTCH2 N2ICD. Interacts (C-terminus) with CBY1 (C-terminus), TCIM competes with CTNNB1 for the interaction with CBY1. In terms of tissue distribution, expressed in liver, expression levels decrease in regenerating liver. In bone marrow, expressed in large progenitor-like cells, cells with ring-shaped nuclei and, at lower, levels in hematopietic stem cell-like cells with round nuclei (at protein level).

The protein resides in the cytoplasm. It localises to the nucleus. Its subcellular location is the nucleolus. It is found in the nucleus speckle. Seems to be involved in the regulation of cell growth an differentiation, may play different and opposite roles depending on the tissue or cell type. May enhance the WNT-CTNNB1 pathway by relieving antagonistic activity of CBY1. Enhances the proliferation of follicular dendritic cells. Plays a role in the mitogen-activated MAPK2/3 signaling pathway, positively regulates G1-to-S-phase transition of the cell cycle. In endothelial cells, enhances key inflammatory mediators and inflammatory response through the modulation of NF-kappaB transcriptional regulatory activity. Involved in the regulation of heat shock response, seems to play a positive feedback with HSF1 to modulate heat-shock downstream gene expression. Plays a role in the regulation of hematopoiesis even if the mechanisms are unknown. In cancers such as thyroid or lung cancer, it has been described as promoter of cell proliferation, G1-to-S-phase transition and inhibitor of apoptosis. However, it negatively regulates self-renewal of liver cancer cells via suppresion of NOTCH2 signaling. This chain is Transcriptional and immune response regulator, found in Mus musculus (Mouse).